The chain runs to 817 residues: Transcription factor SPT20 homolog-like 2 (817 aa).

The span at 1–14 (MDRDLEQALDRTEN) shows a compositional bias: basic and acidic residues. 5 disordered regions span residues 1–28 (MDRD…RRRY), 249–275 (PQQE…ERKV), 369–553 (PRKK…AAGR), 598–630 (PGSG…AVQA), and 675–697 (QLQQ…LGLS). Positions 423 to 440 (SHSSSGPASVSQLSSWKT) are enriched in polar residues. 4 stretches are compositionally biased toward low complexity: residues 469–479 (SSSGKISSGNS), 494–505 (PAAAPAVAAAAP), 513–531 (AAPA…GAAP), and 598–618 (PGSG…SSGG).

It belongs to the SPT20 family.

The polypeptide is Transcription factor SPT20 homolog-like 2 (SUPT20HL2) (Homo sapiens (Human)).